A 468-amino-acid chain; its full sequence is Zinc finger CCCH domain-containing protein 32 (468 aa).

The tract at residues 1 to 25 (MYARNPPLNGSQSAQAPDWTPADAD) is disordered. 5 consecutive C3H1-type zinc fingers follow at residues 45 to 73 (RPGA…HPRD), 90 to 118 (RFGE…HPKN), 136 to 164 (REGD…HPQP), 289 to 317 (RPGE…HPRD), and 335 to 363 (RPGV…HPMG).

It localises to the nucleus. This Arabidopsis thaliana (Mouse-ear cress) protein is Zinc finger CCCH domain-containing protein 32.